The primary structure comprises 186 residues: GTP cyclohydrolase 1 2 (186 aa).

This sequence belongs to the GTP cyclohydrolase I family. As to quaternary structure, homomer.

It catalyses the reaction GTP + H2O = 7,8-dihydroneopterin 3'-triphosphate + formate + H(+). It functions in the pathway cofactor biosynthesis; 7,8-dihydroneopterin triphosphate biosynthesis; 7,8-dihydroneopterin triphosphate from GTP: step 1/1. In Pseudomonas putida (strain ATCC 47054 / DSM 6125 / CFBP 8728 / NCIMB 11950 / KT2440), this protein is GTP cyclohydrolase 1 2.